The sequence spans 415 residues: Serine hydroxymethyltransferase (415 aa).

Residues Leu-115 and 119-121 (GHL) contribute to the (6S)-5,6,7,8-tetrahydrofolate site. Lys-224 carries the N6-(pyridoxal phosphate)lysine modification. 348–350 (SPF) is a (6S)-5,6,7,8-tetrahydrofolate binding site.

Belongs to the SHMT family. As to quaternary structure, homodimer. Pyridoxal 5'-phosphate is required as a cofactor.

The protein resides in the cytoplasm. It catalyses the reaction (6R)-5,10-methylene-5,6,7,8-tetrahydrofolate + glycine + H2O = (6S)-5,6,7,8-tetrahydrofolate + L-serine. It participates in one-carbon metabolism; tetrahydrofolate interconversion. The protein operates within amino-acid biosynthesis; glycine biosynthesis; glycine from L-serine: step 1/1. Catalyzes the reversible interconversion of serine and glycine with tetrahydrofolate (THF) serving as the one-carbon carrier. This reaction serves as the major source of one-carbon groups required for the biosynthesis of purines, thymidylate, methionine, and other important biomolecules. Also exhibits THF-independent aldolase activity toward beta-hydroxyamino acids, producing glycine and aldehydes, via a retro-aldol mechanism. In Latilactobacillus sakei subsp. sakei (strain 23K) (Lactobacillus sakei subsp. sakei), this protein is Serine hydroxymethyltransferase.